Consider the following 286-residue polypeptide: Ribosomal RNA small subunit methyltransferase A (286 aa).

Positions 33, 35, 60, 81, 111, and 129 each coordinate S-adenosyl-L-methionine.

The protein belongs to the class I-like SAM-binding methyltransferase superfamily. rRNA adenine N(6)-methyltransferase family. RsmA subfamily.

The protein localises to the cytoplasm. The enzyme catalyses adenosine(1518)/adenosine(1519) in 16S rRNA + 4 S-adenosyl-L-methionine = N(6)-dimethyladenosine(1518)/N(6)-dimethyladenosine(1519) in 16S rRNA + 4 S-adenosyl-L-homocysteine + 4 H(+). Functionally, specifically dimethylates two adjacent adenosines (A1518 and A1519) in the loop of a conserved hairpin near the 3'-end of 16S rRNA in the 30S particle. May play a critical role in biogenesis of 30S subunits. The polypeptide is Ribosomal RNA small subunit methyltransferase A (Streptomyces coelicolor (strain ATCC BAA-471 / A3(2) / M145)).